We begin with the raw amino-acid sequence, 808 residues long: Protein translocase subunit SecA (808 aa).

ATP contacts are provided by residues glutamine 87, 105-109 (GEGKT), and aspartate 493.

The protein belongs to the SecA family. As to quaternary structure, monomer and homodimer. Part of the essential Sec protein translocation apparatus which comprises SecA, SecYEG and auxiliary proteins SecDF. Other proteins may also be involved.

The protein localises to the cell membrane. It localises to the cytoplasm. The catalysed reaction is ATP + H2O + cellular proteinSide 1 = ADP + phosphate + cellular proteinSide 2.. In terms of biological role, part of the Sec protein translocase complex. Interacts with the SecYEG preprotein conducting channel. Has a central role in coupling the hydrolysis of ATP to the transfer of proteins into and across the cell membrane, serving as an ATP-driven molecular motor driving the stepwise translocation of polypeptide chains across the membrane. This chain is Protein translocase subunit SecA, found in Mycoplasma pneumoniae (strain ATCC 29342 / M129 / Subtype 1) (Mycoplasmoides pneumoniae).